Consider the following 340-residue polypeptide: Flavonoid 7-O-methyltransferase 2 (340 aa).

Residue Asp207 coordinates S-adenosyl-L-methionine. The active-site Proton acceptor is His245.

It belongs to the class I-like SAM-binding methyltransferase superfamily. Cation-independent O-methyltransferase family. Homodimer. As to expression, expressed in leaves.

The enzyme catalyses scutellarein 4'-methyl ether + S-adenosyl-L-methionine = ladanein + S-adenosyl-L-homocysteine. It carries out the reaction acacetin + S-adenosyl-L-methionine = apigenin 4',7-dimethyl ether + S-adenosyl-L-homocysteine. The catalysed reaction is diosmetin + S-adenosyl-L-methionine = luteolin 4',7-dimethyl ether + S-adenosyl-L-homocysteine. It catalyses the reaction chrysoeriol + S-adenosyl-L-methionine = velutin + S-adenosyl-L-homocysteine. The enzyme catalyses (2S)-naringenin + S-adenosyl-L-methionine = (2S)-sakuranetin + S-adenosyl-L-homocysteine + H(+). It carries out the reaction apigenin + S-adenosyl-L-methionine = genkwanin + S-adenosyl-L-homocysteine + H(+). The catalysed reaction is luteolin + S-adenosyl-L-methionine = luteolin 7-methyl ether + S-adenosyl-L-homocysteine + H(+). It catalyses the reaction scutellarein + S-adenosyl-L-methionine = scutellarein 7-methyl ether + S-adenosyl-L-homocysteine. It participates in flavonoid metabolism. Flavonoid 7-O-methyltransferase involved in the biosynthesis of polymethoxylated flavonoids natural products such as nevadensin and salvigenin, aroma compounds which contribute to the flavor of sweet basil, and exhibit pharmacological activities such as anti-allergic, anti-oxidant, antibacterial, anti-proliferative, and anti-inflammatory effects. Catalyzes S-adenosylmethionine-dependent regioselective 7-O-methylation of flavonoids; active on various hydroxylated flavonoid substrates, including apigenin (API) and luteolin (LUT), and, with a lower efficiency, scutellarein (SCU), naringenin (NAR), chrysoeriol (CHRYS), diosmetin (DIOS), acacetin (ACA) and scutellarein-7-methyl ether (SCU7Me). This Ocimum basilicum (Sweet basil) protein is Flavonoid 7-O-methyltransferase 2.